A 606-amino-acid chain; its full sequence is Elongation factor 4 (606 aa).

In terms of domain architecture, tr-type G spans 10 to 192; that stretch reads IRKKNFCIIA…AICKYVPSPR (183 aa). Residues 22–27 and 139–142 contribute to the GTP site; these read DHGKST and NKID.

Belongs to the TRAFAC class translation factor GTPase superfamily. Classic translation factor GTPase family. LepA subfamily.

It is found in the cell inner membrane. It catalyses the reaction GTP + H2O = GDP + phosphate + H(+). Required for accurate and efficient protein synthesis under certain stress conditions. May act as a fidelity factor of the translation reaction, by catalyzing a one-codon backward translocation of tRNAs on improperly translocated ribosomes. Back-translocation proceeds from a post-translocation (POST) complex to a pre-translocation (PRE) complex, thus giving elongation factor G a second chance to translocate the tRNAs correctly. Binds to ribosomes in a GTP-dependent manner. The protein is Elongation factor 4 of Borreliella burgdorferi (strain ATCC 35210 / DSM 4680 / CIP 102532 / B31) (Borrelia burgdorferi).